The primary structure comprises 176 residues: MGNEASYHSEMGTHFDHDEIKRLGRSFKKMDLDKSGSLSVDEFMSLPELQQNPLVGRVIDIFDTDGNGEVDFREFIVGTSQFSVKGDEEQKLRFAFRIYDMDNDGFISNGELFQVLKMMVGNNLKDWQLQQLVDKSILVLDKDGDGRISFEEFRDVVRTMEIHKKLVVFVDHGQED.

The N-myristoyl glycine moiety is linked to residue G2. EF-hand domains follow at residues 18–53, 57–85, 87–122, and 128–163; these read DEIK…QQNP, RVID…FSVK, DEEQ…MVGN, and QLQQ…MEIH. Residues D31, D33, S35, S37, E42, D63, D65, N67, E69, E74, D100, D102, D104, and E111 each coordinate Ca(2+). The interval 131-136 is calcineurin A binding; the sequence is QLVDKS. Residues D141, D143, D145, R147, and E152 each contribute to the Ca(2+) site.

The protein belongs to the calcineurin regulatory subunit family. As to quaternary structure, forms a complex composed of a calmodulin-dependent catalytic subunit (also known as calcineurin A) and a regulatory Ca(2+)-binding subunit (also known as calcineurin B). There are three catalytic subunits, each encoded by a separate gene (PPP3CA, PPP3CB, and PPP3CC) and two regulatory subunits which are also encoded by separate genes (PPP3R1 and PPP3R2). Interacts with SPATA33 (via PQIIIT motif). In terms of tissue distribution, testis specific.

It is found in the mitochondrion. In terms of biological role, regulatory subunit of calcineurin, a calcium-dependent, calmodulin stimulated protein phosphatase. Confers calcium sensitivity. The polypeptide is Calcineurin subunit B type 2 (Ppp3r2) (Rattus norvegicus (Rat)).